Reading from the N-terminus, the 249-residue chain is Urease accessory protein UreG (249 aa).

The span at 1-13 (MHLGHEEFQRTDG) shows a compositional bias: basic and acidic residues. The segment at 1–34 (MHLGHEEFQRTDGRASTGPADAGPAGAGRAPRIG) is disordered. Low complexity predominate over residues 18-33 (GPADAGPAGAGRAPRI). GTP is bound at residue 37–44 (GPVGSGKT). Positions 229–249 (PRGGSYDASDASNASQPLNRM) are disordered. Residues 238–249 (DASNASQPLNRM) are compositionally biased toward polar residues.

Belongs to the SIMIBI class G3E GTPase family. UreG subfamily. In terms of assembly, homodimer. UreD, UreF and UreG form a complex that acts as a GTP-hydrolysis-dependent molecular chaperone, activating the urease apoprotein by helping to assemble the nickel containing metallocenter of UreC. The UreE protein probably delivers the nickel.

Its subcellular location is the cytoplasm. Functionally, facilitates the functional incorporation of the urease nickel metallocenter. This process requires GTP hydrolysis, probably effectuated by UreG. The chain is Urease accessory protein UreG from Frankia casuarinae (strain DSM 45818 / CECT 9043 / HFP020203 / CcI3).